Here is a 273-residue protein sequence, read N- to C-terminus: Glutamate racemase (273 aa).

Residues 9–10 (DS) and 41–42 (YG) contribute to the substrate site. Cysteine 73 serves as the catalytic Proton donor/acceptor. Residue 74–75 (NT) participates in substrate binding. Cysteine 183 (proton donor/acceptor) is an active-site residue. Position 184 to 185 (184 to 185 (TH)) interacts with substrate.

This sequence belongs to the aspartate/glutamate racemases family.

It catalyses the reaction L-glutamate = D-glutamate. The protein operates within cell wall biogenesis; peptidoglycan biosynthesis. Functionally, provides the (R)-glutamate required for cell wall biosynthesis. This Shewanella sp. (strain ANA-3) protein is Glutamate racemase.